Consider the following 1407-residue polypeptide: MKDLLNLFNQQRQTLDFDAIKIGLASPALIRSWSFGEVKKPETINYRTFKPERDGLFCAAIFGPIKDYECLCGKYKRMKHRGVVCEKCGTEVTLAKVRRERMGCIELASPVAHIWFLKSLPSRIGLMLDMTLRDIERVLYFEAYVVTEPGLTPLERRQLLTEEQYLQARQEHADDFDASMGAEAVYELLRMIDLQSEMARLREEIVVTGSETKLKRLTKRIKLIEAFIESGNRPEWMILTVLPVLPPDLRPLVPLDGGRFATSDLNDLYRRVINRNNRLCRLLELSAPDIIVRNEKRMLQESVDALLDNGRRGRAITGTNKRPLKSLADMIKGKQGRFRQNLLGKRVDYSARSVIIVGPNLRLHQCGLPKKMALELFKPFVFAKLQRRGLATTIKGAKKLVEREEAEVWDILEEVISEHPVVLNRAPTLHRQGIQAFEPVLIEGKAIQLHPLVCTAFNADFDGDQMAVHVPLSLEAQLEARALMMSTNNILSPANGEPIIVPSQDVVLGLYYMSRALENKKGEGMVFANTSELKRAYDNSVVELHAKVKVRITEIETDDQGLRNKASSIVDTTVGRALLSEILPEGLPFVLVNTEMTKKNISRLINSSYRMLGLKETVVFADKLMYTGYAYATRAGVSICIDDMLIPIEKKEILGEAEQEVLEIQEQYQSGLVTAGERYNKVVDIWSRTNERIAKAMMDTIGTERVVNADGEIVDQKSMNSLYIMADSGARGSPQQIRQLAAMRGLMVRPDGSIIETPIKANFREGLSVQEYFNSTHGARKGLADTALKTANSGYLTRRLVDVTQDLCVVQLDCGTAGGLTMTPIVEGGDVVEPLKDRVLGRVVAEDVLLPGNDDEPIVTRSTLLDEQWVAKLEEAGVQSVKVRSPITCESPFGVCALCYGRDLARGHLVNMGEAVGVIAAQSIGEPGTQLTMRTFHIGGTALSAAAIDNITVKTSGSVKFTNLKYVEHANGTLVAVSRSGEISVLDTHGRERERYKLPYGATINVKDMAEVKSGQILANWDPHNHPIVSEVAGFVRFIDFVDGVTVIEKTDDLTGLSSREIADLKRRGSQGKDLRPLVRIVDKKGNDLTIPGTDLSAQYLLPPRSIVNLQDGAPVGIGDVVAKIPQEASKTRDITGGLPRVADLFEARRPKDPAILAERSGVISFGKDTKGKQRLIIKDADGSEHEELIPKYRQIIVFEGEHVTKGETIVDGEPSPQDILRLLGIEPLAAYLVKEIQDVYRLQGVKINDKHIEVITRQMLRKVEIVDQGNSKFLNGEQVERQRVIDENAKLIARNELPAKYNPVLLGITKASLATESFISAASFQETTRVLTEAAVRGTRDNLRGLKENVIVGRLIPAGTGQTYHSQRRYSSVGLTESEMETLVGRSTSSGTEVTSPSKDAIPLGG.

Positions 70, 72, 85, and 88 each coordinate Zn(2+). Residues aspartate 460, aspartate 462, and aspartate 464 each contribute to the Mg(2+) site. Cysteine 814, cysteine 889, cysteine 896, and cysteine 899 together coordinate Zn(2+). Residues leucine 1384–glycine 1407 are disordered. The span at glycine 1386–serine 1399 shows a compositional bias: polar residues.

It belongs to the RNA polymerase beta' chain family. The RNAP catalytic core consists of 2 alpha, 1 beta, 1 beta' and 1 omega subunit. When a sigma factor is associated with the core the holoenzyme is formed, which can initiate transcription. Mg(2+) serves as cofactor. It depends on Zn(2+) as a cofactor.

It catalyses the reaction RNA(n) + a ribonucleoside 5'-triphosphate = RNA(n+1) + diphosphate. Functionally, DNA-dependent RNA polymerase catalyzes the transcription of DNA into RNA using the four ribonucleoside triphosphates as substrates. This is DNA-directed RNA polymerase subunit beta' from Xylella fastidiosa (strain Temecula1 / ATCC 700964).